The chain runs to 259 residues: Phosphatidylglycerol--prolipoprotein diacylglyceryl transferase (259 aa).

A run of 4 helical transmembrane segments spans residues Ile-9–Ile-29, Phe-55–Tyr-75, Glu-92–Cys-112, and Val-117–Gly-137. Arg-138 provides a ligand contact to a 1,2-diacyl-sn-glycero-3-phospho-(1'-sn-glycerol). A run of 3 helical transmembrane segments spans residues Gln-172–Phe-192, Gly-201–Phe-221, and Ile-228–Leu-248.

Belongs to the Lgt family.

Its subcellular location is the cell inner membrane. The enzyme catalyses L-cysteinyl-[prolipoprotein] + a 1,2-diacyl-sn-glycero-3-phospho-(1'-sn-glycerol) = an S-1,2-diacyl-sn-glyceryl-L-cysteinyl-[prolipoprotein] + sn-glycerol 1-phosphate + H(+). It functions in the pathway protein modification; lipoprotein biosynthesis (diacylglyceryl transfer). Its function is as follows. Catalyzes the transfer of the diacylglyceryl group from phosphatidylglycerol to the sulfhydryl group of the N-terminal cysteine of a prolipoprotein, the first step in the formation of mature lipoproteins. This chain is Phosphatidylglycerol--prolipoprotein diacylglyceryl transferase, found in Rickettsia akari (strain Hartford).